The sequence spans 336 residues: uncharacterized protein (336 aa).

This is an uncharacterized protein from Mycoplasma capricolum subsp. capricolum (strain California kid / ATCC 27343 / NCTC 10154).